A 130-amino-acid polypeptide reads, in one-letter code: Large ribosomal subunit protein bL12 (130 aa).

The protein belongs to the bacterial ribosomal protein bL12 family. Homodimer. Part of the ribosomal stalk of the 50S ribosomal subunit. Forms a multimeric L10(L12)X complex, where L10 forms an elongated spine to which 2 to 4 L12 dimers bind in a sequential fashion. Binds GTP-bound translation factors.

Forms part of the ribosomal stalk which helps the ribosome interact with GTP-bound translation factors. Is thus essential for accurate translation. The polypeptide is Large ribosomal subunit protein bL12 (Nostoc punctiforme (strain ATCC 29133 / PCC 73102)).